The chain runs to 776 residues: DNA topoisomerase 1 (776 aa).

The region spanning 1 to 111 (MKLVIVESPA…VESDDFFKRV (111 aa)) is the Toprim domain. Glu-7 and Asp-80 together coordinate Mg(2+). The Topo IA-type catalytic domain maps to 132–568 (DTNLVNAQQA…FWRGFNHNIE (437 aa)). The segment at 166–171 (SAGRVQ) is interaction with DNA. The active-site O-(5'-phospho-DNA)-tyrosine intermediate is the Tyr-304. A C4-type zinc finger spans residues 600–627 (CPSCKTGQLSLKLGKFGAFLACSNYPEC).

It belongs to the type IA topoisomerase family. As to quaternary structure, monomer. Mg(2+) is required as a cofactor.

The enzyme catalyses ATP-independent breakage of single-stranded DNA, followed by passage and rejoining.. Its function is as follows. Releases the supercoiling and torsional tension of DNA, which is introduced during the DNA replication and transcription, by transiently cleaving and rejoining one strand of the DNA duplex. Introduces a single-strand break via transesterification at a target site in duplex DNA. The scissile phosphodiester is attacked by the catalytic tyrosine of the enzyme, resulting in the formation of a DNA-(5'-phosphotyrosyl)-enzyme intermediate and the expulsion of a 3'-OH DNA strand. The free DNA strand then undergoes passage around the unbroken strand, thus removing DNA supercoils. Finally, in the religation step, the DNA 3'-OH attacks the covalent intermediate to expel the active-site tyrosine and restore the DNA phosphodiester backbone. In Rickettsia prowazekii (strain Madrid E), this protein is DNA topoisomerase 1.